Consider the following 224-residue polypeptide: UPF0758 protein Nmul_A2138 (224 aa).

Residues 102–224 (AMDSPGPVRA…TLSFAEQGLI (123 aa)) enclose the MPN domain. Residues His173, His175, and Asp186 each contribute to the Zn(2+) site. The JAMM motif signature appears at 173-186 (HNHPSGAAEPSHAD).

The protein belongs to the UPF0758 family.

This chain is UPF0758 protein Nmul_A2138, found in Nitrosospira multiformis (strain ATCC 25196 / NCIMB 11849 / C 71).